Consider the following 161-residue polypeptide: MAKVLKKPDLTNPALRAKLKKGMGHNYYGEPAWPNDLLYIFPVVIMGTIALVIGLAVMDPAMVGEPADPFATPLEILPEWYLYPTFQIFRVVPNKLLGVLMNASIPLGLMLIPFIESVNKFQNPFRRPVAMTVFLFGTLVTLWLGIGAAFPLDKSLTLGLF.

3 helical membrane-spanning segments follow: residues 37-57 (LLYI…GLAV), 96-116 (LLGV…PFIE), and 130-150 (AMTV…GAAF).

Belongs to the cytochrome b family. PetD subfamily. The 4 large subunits of the cytochrome b6-f complex are cytochrome b6, subunit IV (17 kDa polypeptide, PetD), cytochrome f and the Rieske protein, while the 4 small subunits are PetG, PetL, PetM and PetN. The complex functions as a dimer.

Its subcellular location is the cellular thylakoid membrane. Functionally, component of the cytochrome b6-f complex, which mediates electron transfer between photosystem II (PSII) and photosystem I (PSI), cyclic electron flow around PSI, and state transitions. In Synechococcus elongatus, this protein is Cytochrome b6-f complex subunit 4.